We begin with the raw amino-acid sequence, 82 residues long: UPF0337 protein PP_2059 (82 aa).

The protein belongs to the UPF0337 (CsbD) family.

The chain is UPF0337 protein PP_2059 from Pseudomonas putida (strain ATCC 47054 / DSM 6125 / CFBP 8728 / NCIMB 11950 / KT2440).